Reading from the N-terminus, the 298-residue chain is Acetylglutamate kinase (298 aa).

Substrate is bound by residues 69–70, arginine 91, and asparagine 191; that span reads GG.

It belongs to the acetylglutamate kinase family. ArgB subfamily.

It is found in the cytoplasm. It catalyses the reaction N-acetyl-L-glutamate + ATP = N-acetyl-L-glutamyl 5-phosphate + ADP. It participates in amino-acid biosynthesis; L-arginine biosynthesis; N(2)-acetyl-L-ornithine from L-glutamate: step 2/4. Functionally, catalyzes the ATP-dependent phosphorylation of N-acetyl-L-glutamate. This is Acetylglutamate kinase from Neisseria gonorrhoeae (strain ATCC 700825 / FA 1090).